Here is a 621-residue protein sequence, read N- to C-terminus: Chaperone protein HscA homolog (621 aa).

It belongs to the heat shock protein 70 family.

Chaperone involved in the maturation of iron-sulfur cluster-containing proteins. Has a low intrinsic ATPase activity which is markedly stimulated by HscB. In Ralstonia nicotianae (strain ATCC BAA-1114 / GMI1000) (Ralstonia solanacearum), this protein is Chaperone protein HscA homolog.